Here is a 375-residue protein sequence, read N- to C-terminus: Queuine tRNA-ribosyltransferase (375 aa).

Asp-90 acts as the Proton acceptor in catalysis. Substrate is bound by residues 90-94 (DSGGF), Asp-144, Gln-190, and Gly-217. The RNA binding stretch occupies residues 248 to 254 (GIGTPHY). Asp-267 functions as the Nucleophile in the catalytic mechanism. The RNA binding; important for wobble base 34 recognition stretch occupies residues 272-276 (ARITR). Zn(2+) is bound by residues Cys-305, Cys-307, Cys-310, and His-336.

It belongs to the queuine tRNA-ribosyltransferase family. Homodimer. Within each dimer, one monomer is responsible for RNA recognition and catalysis, while the other monomer binds to the replacement base PreQ1. It depends on Zn(2+) as a cofactor.

The catalysed reaction is 7-aminomethyl-7-carbaguanine + guanosine(34) in tRNA = 7-aminomethyl-7-carbaguanosine(34) in tRNA + guanine. The protein operates within tRNA modification; tRNA-queuosine biosynthesis. Its function is as follows. Catalyzes the base-exchange of a guanine (G) residue with the queuine precursor 7-aminomethyl-7-deazaguanine (PreQ1) at position 34 (anticodon wobble position) in tRNAs with GU(N) anticodons (tRNA-Asp, -Asn, -His and -Tyr). Catalysis occurs through a double-displacement mechanism. The nucleophile active site attacks the C1' of nucleotide 34 to detach the guanine base from the RNA, forming a covalent enzyme-RNA intermediate. The proton acceptor active site deprotonates the incoming PreQ1, allowing a nucleophilic attack on the C1' of the ribose to form the product. After dissociation, two additional enzymatic reactions on the tRNA convert PreQ1 to queuine (Q), resulting in the hypermodified nucleoside queuosine (7-(((4,5-cis-dihydroxy-2-cyclopenten-1-yl)amino)methyl)-7-deazaguanosine). This Borreliella burgdorferi (strain ZS7) (Borrelia burgdorferi) protein is Queuine tRNA-ribosyltransferase.